Consider the following 145-residue polypeptide: 3-hydroxyacyl-[acyl-carrier-protein] dehydratase FabZ (145 aa).

His49 is a catalytic residue.

It belongs to the thioester dehydratase family. FabZ subfamily.

It localises to the cytoplasm. The catalysed reaction is a (3R)-hydroxyacyl-[ACP] = a (2E)-enoyl-[ACP] + H2O. Its function is as follows. Involved in unsaturated fatty acids biosynthesis. Catalyzes the dehydration of short chain beta-hydroxyacyl-ACPs and long chain saturated and unsaturated beta-hydroxyacyl-ACPs. In Rickettsia africae (strain ESF-5), this protein is 3-hydroxyacyl-[acyl-carrier-protein] dehydratase FabZ.